We begin with the raw amino-acid sequence, 616 residues long: Matrix metalloproteinase-21 (616 aa).

The signal sequence occupies residues 1 to 22; that stretch reads MPTAPALGALLLLLGALTPGHQ. Positions 23–192 are excised as a propeptide; sequence EKLFHSRDHS…TSTSKIRKKR (170 aa). Residues 139-146 carry the Cysteine switch motif; the sequence is PRCGVPDN. Cysteine 141 serves as a coordination point for Zn(2+). Positions 157-186 are disordered; that stretch reads SNSNNVTEKASGKSLNTTTNQNPENGTSTS. 3 N-linked (GlcNAc...) asparagine glycosylation sites follow: asparagine 161, asparagine 172, and asparagine 181. A Zn(2+)-binding site is contributed by histidine 329. The active site involves glutamate 330. 2 residues coordinate Zn(2+): histidine 333 and histidine 339. A disulfide bridge links cysteine 375 with cysteine 606. Hemopexin repeat units follow at residues 376-435, 437-493, 494-542, and 549-605; these read EGSF…WHGI, AEGI…FPKI, PSPI…FPAV, and FGNI…WTDI. An N-linked (GlcNAc...) asparagine glycan is attached at asparagine 418. Asparagine 597 is a glycosylation site (N-linked (GlcNAc...) asparagine).

The protein belongs to the peptidase M10A family. Requires Zn(2+) as cofactor. Ca(2+) serves as cofactor. The precursor is cleaved by a furin endopeptidase.

Its subcellular location is the secreted. In terms of biological role, may play a role in gastrulation-related cell movement. Plays a specialized role in the generation of left-right asymmetry during embryogenesis. May act as a negative regulator of the NOTCH-signaling pathway. In Cynops pyrrhogaster (Japanese fire-bellied newt), this protein is Matrix metalloproteinase-21 (MMP21).